The chain runs to 1582 residues: SET-binding protein (1582 aa).

Disordered regions lie at residues Met1–Gly76, Ile124–Ala246, Leu278–Ser416, and Ser446–Glu513. Polar residues predominate over residues Glu18 to Ser27. A compositionally biased stretch (basic and acidic residues) spans Gly57–Val74. Polar residues-rich tracts occupy residues Ile126–Ser141 and Met213–Phe229. The segment covering Leu278–Ser298 has biased composition (low complexity). Over residues Glu356–Tyr365 the composition is skewed to basic and acidic residues. Residues Asp368–Asn388 show a composition bias toward polar residues. The segment covering Gly450 to Glu465 has biased composition (basic and acidic residues). A DNA-binding region (a.T hook 1) is located at residues Lys575 to Leu587. Disordered stretches follow at residues Gly595–Arg617 and Arg709–Glu787. Over residues Leu770–Glu787 the composition is skewed to polar residues. An N6-acetyllysine modification is found at Lys808. Residues Ser845–Asp871 are compositionally biased toward polar residues. Residues Ser845–Arg880 form a disordered region. A DNA-binding region (a.T hook 2) is located at residues Lys1007–Thr1019. Disordered stretches follow at residues Val1128–Leu1155, Ser1182–Asn1215, Ala1236–Glu1265, Gln1429–Met1461, Leu1470–Ser1489, and Glu1507–Pro1582. The segment covering Arg1137 to Lys1150 has biased composition (basic residues). Residues Ser1182 to Lys1196 show a composition bias toward basic and acidic residues. Residues Val1439–Lys1448 show a composition bias toward basic residues. Residues Lys1440 to Gln1452 constitute a DNA-binding region (a.T hook 3). 2 stretches are compositionally biased toward pro residues: residues Pro1509 to Pro1533 and Gln1546 to Leu1559.

In terms of assembly, interacts with SET.

The protein localises to the nucleus. The polypeptide is SET-binding protein (Setbp1) (Mus musculus (Mouse)).